A 190-amino-acid polypeptide reads, in one-letter code: Large ribosomal subunit protein uL5 (190 aa).

This sequence belongs to the universal ribosomal protein uL5 family. In terms of assembly, part of the 50S ribosomal subunit; part of the 5S rRNA/L5/L18/L25 subcomplex. Contacts the 5S rRNA and the P site tRNA. Forms a bridge to the 30S subunit in the 70S ribosome.

In terms of biological role, this is one of the proteins that bind and probably mediate the attachment of the 5S RNA into the large ribosomal subunit, where it forms part of the central protuberance. In the 70S ribosome it contacts protein S13 of the 30S subunit (bridge B1b), connecting the 2 subunits; this bridge is implicated in subunit movement. Contacts the P site tRNA; the 5S rRNA and some of its associated proteins might help stabilize positioning of ribosome-bound tRNAs. This Corynebacterium efficiens (strain DSM 44549 / YS-314 / AJ 12310 / JCM 11189 / NBRC 100395) protein is Large ribosomal subunit protein uL5.